A 281-amino-acid polypeptide reads, in one-letter code: MITSAHIDDIRTQVRAWRAKGETVAFVPTMGNLHQGHITLVKEAASKCDHVVASIFVNPMQFGQNEDLDAYPRTLAADSEALTAAGAELLFTPTPAVMYPKGLEQQTYVEVPGISDVLCGASRPGHFRGVATIVCKLFNIVQPDVALFGNKDYQQLLVIKTMVEDLSLPIEIIGVDTIREDSGLAMSSRNGYLTAAEKAAAPALKQAIDAMAAGIKQGESFEQVTEQAKAKLVAAGFTPDYLEIRHAHTLEQAQNQDQALVILAAAYIGKARLIDNLRFDR.

An ATP-binding site is contributed by 30–37 (MGNLHQGH). Residue His37 is the Proton donor of the active site. Residue Gln61 coordinates (R)-pantoate. Position 61 (Gln61) interacts with beta-alanine. Residue 149-152 (GNKD) participates in ATP binding. Gln155 provides a ligand contact to (R)-pantoate. ATP-binding positions include Ile178 and 186 to 189 (MSSR).

Belongs to the pantothenate synthetase family. As to quaternary structure, homodimer.

Its subcellular location is the cytoplasm. The enzyme catalyses (R)-pantoate + beta-alanine + ATP = (R)-pantothenate + AMP + diphosphate + H(+). Its pathway is cofactor biosynthesis; (R)-pantothenate biosynthesis; (R)-pantothenate from (R)-pantoate and beta-alanine: step 1/1. Catalyzes the condensation of pantoate with beta-alanine in an ATP-dependent reaction via a pantoyl-adenylate intermediate. This is Pantothenate synthetase from Shewanella baltica (strain OS223).